Here is a 219-residue protein sequence, read N- to C-terminus: MGRLDVKNSWIEFHQDEMTSFLKLAIIGTVLLGVAHGANLTAAEKETYCELRSAIQTFLCIERLRDFAAKVDELDMDKKSELKEFKKTCDSLKNCFAITRCGPNSTMDEAELFRMVEKNCEAVVYIHEDFSDCSDKLTAKKSVCFDNWDPIPDGIHLEEDEKKVEKMKKETCKRYFGKDDCMKKEIVETCSQKEWDKFREQFINLSSDLVSKCDFSRLG.

Topologically, residues 1–20 (MGRLDVKNSWIEFHQDEMTS) are cytoplasmic. The helical; Signal-anchor for type II membrane protein transmembrane segment at 21-43 (FLKLAIIGTVLLGVAHGANLTAA) threads the bilayer. At 44 to 219 (EKETYCELRS…VSKCDFSRLG (176 aa)) the chain is on the extracellular side. 2 N-linked (GlcNAc...) asparagine glycosylation sites follow: N104 and N204.

This sequence belongs to the UPF0376 family.

The protein localises to the membrane. The protein is UPF0376 protein C36C5.12 of Caenorhabditis elegans.